Here is a 132-residue protein sequence, read N- to C-terminus: Small ribosomal subunit protein uS8 (132 aa).

Part of the 30S ribosomal subunit. Contacts proteins S5 and S12. Post-translationally, a modified and unmodified form exist; the nature of the modification(s) is unknown.

One of the primary rRNA binding proteins, it binds directly to 16S rRNA central domain where it helps coordinate assembly of the platform of the 30S subunit. The protein is Small ribosomal subunit protein uS8 of Rhodopseudomonas palustris (strain ATCC BAA-98 / CGA009).